A 104-amino-acid polypeptide reads, in one-letter code: Large ribosomal subunit protein uL24 (104 aa).

Belongs to the universal ribosomal protein uL24 family. As to quaternary structure, part of the 50S ribosomal subunit.

One of two assembly initiator proteins, it binds directly to the 5'-end of the 23S rRNA, where it nucleates assembly of the 50S subunit. Its function is as follows. One of the proteins that surrounds the polypeptide exit tunnel on the outside of the subunit. In Pseudomonas fluorescens (strain SBW25), this protein is Large ribosomal subunit protein uL24.